The following is a 75-amino-acid chain: DNA-directed RNA polymerase subunit omega (75 aa).

Belongs to the RNA polymerase subunit omega family. In terms of assembly, in cyanobacteria the RNAP catalytic core is composed of 2 alpha, 1 beta, 1 beta', 1 gamma and 1 omega subunit. When a sigma factor is associated with the core the holoenzyme is formed, which can initiate transcription.

It carries out the reaction RNA(n) + a ribonucleoside 5'-triphosphate = RNA(n+1) + diphosphate. Promotes RNA polymerase assembly. Latches the N- and C-terminal regions of the beta' subunit thereby facilitating its interaction with the beta and alpha subunits. This Parasynechococcus marenigrum (strain WH8102) protein is DNA-directed RNA polymerase subunit omega.